The chain runs to 312 residues: Glycine--tRNA ligase alpha subunit (312 aa).

It belongs to the class-II aminoacyl-tRNA synthetase family. Tetramer of two alpha and two beta subunits.

It is found in the cytoplasm. The enzyme catalyses tRNA(Gly) + glycine + ATP = glycyl-tRNA(Gly) + AMP + diphosphate. This Thiobacillus denitrificans (strain ATCC 25259 / T1) protein is Glycine--tRNA ligase alpha subunit.